The primary structure comprises 323 residues: Aldo-keto reductase family 1 member C23-like protein (323 aa).

20-24 (GFGTY) provides a ligand contact to NADP(+). Position 31 (K31) interacts with substrate. D50 serves as a coordination point for NADP(+). Residue Y55 is the Proton donor of the active site. H117 lines the substrate pocket. Residues 166–167 (SN), Q190, 216–222 (YGALGTQ), and 270–280 (KSYNEKRIKEN) contribute to the NADP(+) site.

The protein belongs to the aldo/keto reductase family. In terms of assembly, monomer. In terms of tissue distribution, detected in endometrium surface epithelium (at protein level). Detected in endometrium.

The protein localises to the cytoplasm. Its function is as follows. NADP-dependent oxidoreductase involved in steroid metabolism. May act on various hydroxysteroids. This Equus caballus (Horse) protein is Aldo-keto reductase family 1 member C23-like protein (PGFS).